Consider the following 62-residue polypeptide: Photosystem II reaction center protein Z (62 aa).

The next 2 membrane-spanning stretches (helical) occupy residues 8-28 (TLFA…VVFA) and 41-61 (FSGI…NSFV).

It belongs to the PsbZ family. As to quaternary structure, PSII is composed of 1 copy each of membrane proteins PsbA, PsbB, PsbC, PsbD, PsbE, PsbF, PsbH, PsbI, PsbJ, PsbK, PsbL, PsbM, PsbT, PsbY, PsbZ, Psb30/Ycf12, at least 3 peripheral proteins of the oxygen-evolving complex and a large number of cofactors. It forms dimeric complexes.

It localises to the plastid. The protein localises to the chloroplast thylakoid membrane. In terms of biological role, may control the interaction of photosystem II (PSII) cores with the light-harvesting antenna, regulates electron flow through the 2 photosystem reaction centers. PSII is a light-driven water plastoquinone oxidoreductase, using light energy to abstract electrons from H(2)O, generating a proton gradient subsequently used for ATP formation. The chain is Photosystem II reaction center protein Z from Tupiella akineta (Green alga).